The primary structure comprises 231 residues: Protein OPG061 (231 aa).

It belongs to the orthopoxvirus OPG058 family.

It localises to the host nucleus. The protein resides in the host nucleolus. In Homo sapiens (Human), this protein is Protein OPG061 (OPG061).